The sequence spans 236 residues: Probable calcium-binding protein CML30 (236 aa).

The interval 43–64 is disordered; it reads VVVVAKKRPEEEPRRPDPDADL. Positions 49-60 are enriched in basic and acidic residues; that stretch reads KRPEEEPRRPDP. 2 EF-hand domains span residues 59-94 and 96-131; these read DPDA…LGIA and SSAA…IPKR. Ca(2+) is bound by residues D72, D74, D76, E83, D109, N111, D113, and E120. Residues 130 to 158 form a disordered region; that stretch reads KRRKSHQQHPLPSTAAADEEAAAADEEYE. Positions 146–158 are enriched in acidic residues; the sequence is ADEEAAAADEEYE. EF-hand domains lie at 161–196 and 202–236; these read EEER…LGLR and PAVA…VVKA. Ca(2+)-binding residues include D174, N176, D178, E185, D215, D217, D219, M221, and E226.

Potential calcium sensor. The chain is Probable calcium-binding protein CML30 (CML30) from Oryza sativa subsp. japonica (Rice).